Reading from the N-terminus, the 150-residue chain is MSASSQQQQSASSSSVASFNGGGFGGGLGIGGGFGGFGGMSSFNAQSSSSYSSSTVINSFASLGSQIAAIQGMMAGGSFTQTIAMQQMSQLAVSMQLALTQSAGCSCLTQVNSSNLDPAVHIYLNRSLSYFYRSLTSFHPSEVYFPNFRH.

In terms of biological role, involved in the development of infection structures. The germ tube elongates across the leaf surface of the infected plant until it recognizes a stomate. Physical stimuli provided by the stomate induce differentiation of the germ tube to form a series of infection structures involved in host colonization. The protein is Infection structure-specific protein 24 (INF24) of Uromyces appendiculatus (Rust fungus).